The following is a 44-amino-acid chain: Iota-conotoxin-like R11.11 (44 aa).

4 disulfides stabilise this stretch: C5-C19, C12-C22, C18-C27, and C21-C36. Position 44 (R44) is a propeptide, removed by a carboxypeptidase.

It belongs to the conotoxin I1 superfamily. As to expression, expressed by the venom duct.

It localises to the secreted. Its function is as follows. Iota-conotoxins bind to voltage-gated sodium channels (Nav) and act as agonists by shifting the voltage-dependence of activation to more hyperpolarized levels. Produces general excitatory symptoms. The sequence is that of Iota-conotoxin-like R11.11 from Conus radiatus (Rayed cone).